We begin with the raw amino-acid sequence, 80 residues long: MLPLAKNALSRLQVRSIQQVVARQSHQKKTPTFHDKYGNAVLAGGSIFCISAWTYTATQIGIEWNLSPVGRVTPKEWRDQ.

A mitochondrion-targeting transit peptide spans 1–24; it reads MLPLAKNALSRLQVRSIQQVVARQ. Over 25–32 the chain is Mitochondrial matrix; sequence SHQKKTPT. A helical membrane pass occupies residues 33–59; that stretch reads FHDKYGNAVLAGGSIFCISAWTYTATQ. The Mitochondrial intermembrane portion of the chain corresponds to 60–80; it reads IGIEWNLSPVGRVTPKEWRDQ.

It belongs to the cytochrome c oxidase VIIb family. In terms of assembly, component of the cytochrome c oxidase (complex IV, CIV), a multisubunit enzyme composed of 14 subunits. The complex is composed of a catalytic core of 3 subunits MT-CO1, MT-CO2 and MT-CO3, encoded in the mitochondrial DNA, and 11 supernumerary subunits COX4I, COX5A, COX5B, COX6A, COX6B, COX6C, COX7A, COX7B, COX7C, COX8 and NDUFA4, which are encoded in the nuclear genome. The complex exists as a monomer or a dimer and forms supercomplexes (SCs) in the inner mitochondrial membrane with NADH-ubiquinone oxidoreductase (complex I, CI) and ubiquinol-cytochrome c oxidoreductase (cytochrome b-c1 complex, complex III, CIII), resulting in different assemblies (supercomplex SCI(1)III(2)IV(1) and megacomplex MCI(2)III(2)IV(2)).

It is found in the mitochondrion inner membrane. The protein operates within energy metabolism; oxidative phosphorylation. Component of the cytochrome c oxidase, the last enzyme in the mitochondrial electron transport chain which drives oxidative phosphorylation. The respiratory chain contains 3 multisubunit complexes succinate dehydrogenase (complex II, CII), ubiquinol-cytochrome c oxidoreductase (cytochrome b-c1 complex, complex III, CIII) and cytochrome c oxidase (complex IV, CIV), that cooperate to transfer electrons derived from NADH and succinate to molecular oxygen, creating an electrochemical gradient over the inner membrane that drives transmembrane transport and the ATP synthase. Cytochrome c oxidase is the component of the respiratory chain that catalyzes the reduction of oxygen to water. Electrons originating from reduced cytochrome c in the intermembrane space (IMS) are transferred via the dinuclear copper A center (CU(A)) of subunit 2 and heme A of subunit 1 to the active site in subunit 1, a binuclear center (BNC) formed by heme A3 and copper B (CU(B)). The BNC reduces molecular oxygen to 2 water molecules using 4 electrons from cytochrome c in the IMS and 4 protons from the mitochondrial matrix. Plays a role in proper central nervous system (CNS) development in vertebrates. This Rattus norvegicus (Rat) protein is Cytochrome c oxidase subunit 7B, mitochondrial (Cox7b).